The primary structure comprises 301 residues: RNA polymerase II holoenzyme cyclin-like subunit (301 aa).

One can recognise a Cyclin N-terminal domain in the interval 53-142; that stretch reads QQLIKLGKRM…LGECEFALIS (90 aa).

Belongs to the cyclin family. Cyclin C subfamily. In terms of assembly, component of the srb8-11 complex, a regulatory module of the Mediator complex.

It is found in the nucleus. Component of the srb8-11 complex. The srb8-11 complex is a regulatory module of the Mediator complex which is itself involved in regulation of basal and activated RNA polymerase II-dependent transcription. The srb8-11 complex may be involved in the transcriptional repression of a subset of genes regulated by Mediator. It may inhibit the association of the Mediator complex with RNA polymerase II to form the holoenzyme complex. The srb8-11 complex phosphorylates the C-terminal domain (CTD) of the largest subunit of RNA polymerase II. The sequence is that of RNA polymerase II holoenzyme cyclin-like subunit (ssn8) from Aspergillus oryzae (strain ATCC 42149 / RIB 40) (Yellow koji mold).